Here is a 138-residue protein sequence, read N- to C-terminus: Protein A2-A3 (138 aa).

This sequence belongs to the T5likevirus A2 protein family. Interacts with A1 protein; the two proteins form heterooligomers.

In terms of biological role, involved, together with A1 protein, in the second step transfer (SST) which allows the completion of viral DNA into the host cell. The sequence is that of Protein A2-A3 (A2-A3) from Escherichia coli (Enterobacteria phage BF23).